The chain runs to 355 residues: Guanine nucleotide-binding protein G(i) subunit alpha-2 (355 aa).

Glycine 2 carries N-myristoyl glycine lipidation. Cysteine 3 carries the S-palmitoyl cysteine lipid modification. Residues 32-355 (REVKLLLLGA…KNNLKDCGLF (324 aa)) form the G-alpha domain. The segment at 35-48 (KLLLLGAGESGKST) is G1 motif. GTP is bound by residues 40–47 (GAGESGKS), 176–182 (LRTRVKT), 201–205 (DVGGQ), 270–273 (NKKD), and alanine 327. Serine 47 and threonine 182 together coordinate Mg(2+). The G2 motif stretch occupies residues 174 to 182 (DVLRTRVKT). Residues 197–206 (FKMFDVGGQR) form a G3 motif region. The segment at 266-273 (ILFLNKKD) is G4 motif. A G5 motif region spans residues 325–330 (TCATDT).

It belongs to the G-alpha family. G(i/o/t/z) subfamily. In terms of assembly, g proteins are composed of 3 units; alpha, beta and gamma. The alpha chain contains the guanine nucleotide binding site.

It is found in the cytoplasm. It localises to the cytoskeleton. The protein localises to the microtubule organizing center. Its subcellular location is the centrosome. The protein resides in the cell membrane. Guanine nucleotide-binding proteins (G proteins) are involved as modulators or transducers in various transmembrane signaling systems. The G(i) proteins are involved in hormonal regulation of adenylate cyclase: they inhibit the cyclase in response to beta-adrenergic stimuli. May play a role in cell division. The polypeptide is Guanine nucleotide-binding protein G(i) subunit alpha-2 (GNAI2) (Gallus gallus (Chicken)).